A 496-amino-acid polypeptide reads, in one-letter code: 4-O-methyl-glucuronoyl methylesterase 1 (496 aa).

Positions 1 to 19 are cleaved as a signal peptide; the sequence is MKSTVASALLVLAGTAVQA. One can recognise a CBM1 domain in the interval 20–55; sequence QSGPWQQCGGIGWQGPFTCVSGHTCQVLNDWYHQCV. The segment at 57-151 is disordered; that stretch reads GGGPSPPPTS…RLPDPFTFHN (95 aa). Over residues 59-125 the composition is skewed to pro residues; the sequence is GPSPPPTSPP…SPPPTSPPPS (67 aa). 3 disulfides stabilise this stretch: C129–C163, C307–C443, and C339–C415. The GXSYXG catalytic site motif signature appears at 306–311; that stretch reads GCSRNG. S308 (nucleophile) is an active-site residue. Substrate-binding residues include K312, Q354, E362, and W406. H442 serves as the catalytic Proton donor/acceptor.

Belongs to the carbohydrate esterase 15 (CE15) family.

It is found in the secreted. It carries out the reaction a 4-O-methyl-alpha-D-glucuronosyl ester derivative + H2O = 4-O-methyl-alpha-D-glucuronate derivative + an alcohol + H(+). Its function is as follows. Glucuronoyl esterase which may play a significant role in biomass degradation, as it is considered to disconnect hemicellulose from lignin through the hydrolysis of the ester bond between 4-O-methyl-D-glucuronic acid residues of glucuronoxylans and aromatic alcohols of lignin. Cleaves native lignin-carbohydrate (LC) ester bonds from LC complex preparations of spruce (softwood) and birch (hardwood), containing mainly hemicelluloses with partially acetylated glucomannans in spruce and partially acetylated xylan in birch. Can hydrolyze benzyl glucuronic acid (BnGlcA), allyl glucuronic acid (allylGlcA) and to a lower degree methyl glucuronic acid (MeGlcA) in vitro. The protein is 4-O-methyl-glucuronoyl methylesterase 1 of Sodiomyces alcalophilus (Acremonium alcalophilum).